A 109-amino-acid chain; its full sequence is Arminin 6560 (109 aa).

An N-terminal signal peptide occupies residues 1-21 (MKCLFGFLFIMLVAFLQDVHG). Positions 22–77 (VDSCIGKPCKVKGEDMKDIKEKKIEDIKEEIKNVKKEIFEDVDDELLDDNIRDDKI) are excised as a propeptide. At isoleucine 106 the chain carries Isoleucine amide.

The protein belongs to the arminin family. In terms of tissue distribution, expressed in the ectodermal epithelium.

The protein resides in the secreted. Its subcellular location is the target cell membrane. Functionally, antimicrobial peptide with a broad-spectrum antimicrobial activity. Keeps its antibacterial activity under a wide range of salt concentrations that mimic physiological conditions of human blood, which is surprising, since Hydra is an obligate freshwater animal with nearly no salt tolerance. Does not affect red blood cells. The chain is Arminin 6560 from Hydra vulgaris (Hydra).